The primary structure comprises 282 residues: Large ribosomal subunit protein uL2 (282 aa).

Disordered regions lie at residues 31 to 56 (EKSL…RHRG) and 226 to 282 (SVMN…GSKM). Residues 35–44 (LDSQSHSAGR) are compositionally biased toward polar residues. The segment covering 257–266 (TVGKKTRSKK) has biased composition (basic residues).

Belongs to the universal ribosomal protein uL2 family. Part of the 50S ribosomal subunit. Forms a bridge to the 30S subunit in the 70S ribosome.

In terms of biological role, one of the primary rRNA binding proteins. Required for association of the 30S and 50S subunits to form the 70S ribosome, for tRNA binding and peptide bond formation. It has been suggested to have peptidyltransferase activity; this is somewhat controversial. Makes several contacts with the 16S rRNA in the 70S ribosome. This Levilactobacillus brevis (strain ATCC 367 / BCRC 12310 / CIP 105137 / JCM 1170 / LMG 11437 / NCIMB 947 / NCTC 947) (Lactobacillus brevis) protein is Large ribosomal subunit protein uL2.